The chain runs to 327 residues: Olfactory receptor 226 (327 aa).

The Extracellular segment spans residues 1-26; the sequence is MERRNHSGRVSEFVLLGFPAPAPLRV. Asn-5 carries N-linked (GlcNAc...) asparagine glycosylation. The chain crosses the membrane as a helical span at residues 27-50; sequence LLFFLSLLAYVLVLTENMLIIIAI. Over 51 to 58 the chain is Cytoplasmic; it reads RNHPTLHK. The helical transmembrane segment at 59 to 80 threads the bilayer; that stretch reads PMYFFLANMSFLEIWYVTVTIP. Residues 81–104 are Extracellular-facing; the sequence is KMLAGFIGSKENHGQLISFEACMT. The cysteines at positions 102 and 194 are disulfide-linked. Residues 105 to 125 form a helical membrane-spanning segment; it reads QLYFFLGLGCTECVLLAVMAY. Over 126–144 the chain is Cytoplasmic; that stretch reads DRYVAICHPLHYPVIVSSR. A helical transmembrane segment spans residues 145-163; sequence LCVQMAAGSWAGGFGISMV. Topologically, residues 164–201 are extracellular; it reads KVFLISRLSYCGPNTINHFFCDVSPLLNLSCTDMSTAE. A helical membrane pass occupies residues 202–224; that stretch reads LTDFVLAIFILLGPLSVTGASYM. Over 225-241 the chain is Cytoplasmic; sequence AITGAVMRIPSAAGRHK. Residues 242–265 form a helical membrane-spanning segment; sequence AFSTCASHLTVVIIFYAASIFIYA. Residues 266–277 lie on the Extracellular side of the membrane; the sequence is RPKALSAFDTNK. A helical membrane pass occupies residues 278–297; that stretch reads LVSVLYAVIVPLFNPIIYCL. Residues 298–327 lie on the Cytoplasmic side of the membrane; the sequence is RNQDVKRALRRTLHLAQDQEANTNKGSKNG.

This sequence belongs to the G-protein coupled receptor 1 family. As to expression, olfactory epithelium.

Its subcellular location is the cell membrane. In terms of biological role, odorant receptor. The polypeptide is Olfactory receptor 226 (Olr226) (Rattus norvegicus (Rat)).